Reading from the N-terminus, the 188-residue chain is Pyridoxal 5'-phosphate synthase subunit PdxT (188 aa).

47 to 49 (GES) contributes to the L-glutamine binding site. Cysteine 79 functions as the Nucleophile in the catalytic mechanism. L-glutamine is bound by residues arginine 105 and 134 to 135 (IR). Catalysis depends on charge relay system residues histidine 170 and glutamate 172.

It belongs to the glutaminase PdxT/SNO family. In the presence of PdxS, forms a dodecamer of heterodimers. Only shows activity in the heterodimer.

The enzyme catalyses aldehydo-D-ribose 5-phosphate + D-glyceraldehyde 3-phosphate + L-glutamine = pyridoxal 5'-phosphate + L-glutamate + phosphate + 3 H2O + H(+). The catalysed reaction is L-glutamine + H2O = L-glutamate + NH4(+). It functions in the pathway cofactor biosynthesis; pyridoxal 5'-phosphate biosynthesis. Functionally, catalyzes the hydrolysis of glutamine to glutamate and ammonia as part of the biosynthesis of pyridoxal 5'-phosphate. The resulting ammonia molecule is channeled to the active site of PdxS. This Listeria welshimeri serovar 6b (strain ATCC 35897 / DSM 20650 / CCUG 15529 / CIP 8149 / NCTC 11857 / SLCC 5334 / V8) protein is Pyridoxal 5'-phosphate synthase subunit PdxT.